Consider the following 158-residue polypeptide: NAD(P)H-quinone oxidoreductase subunit J, chloroplastic (158 aa).

The protein belongs to the complex I 30 kDa subunit family. In terms of assembly, NDH is composed of at least 16 different subunits, 5 of which are encoded in the nucleus.

Its subcellular location is the plastid. It is found in the chloroplast thylakoid membrane. It catalyses the reaction a plastoquinone + NADH + (n+1) H(+)(in) = a plastoquinol + NAD(+) + n H(+)(out). It carries out the reaction a plastoquinone + NADPH + (n+1) H(+)(in) = a plastoquinol + NADP(+) + n H(+)(out). In terms of biological role, NDH shuttles electrons from NAD(P)H:plastoquinone, via FMN and iron-sulfur (Fe-S) centers, to quinones in the photosynthetic chain and possibly in a chloroplast respiratory chain. The immediate electron acceptor for the enzyme in this species is believed to be plastoquinone. Couples the redox reaction to proton translocation, and thus conserves the redox energy in a proton gradient. The protein is NAD(P)H-quinone oxidoreductase subunit J, chloroplastic of Oenothera argillicola (Appalachian evening primrose).